A 622-amino-acid polypeptide reads, in one-letter code: Palmitoyltransferase ZDHHC13 (622 aa).

The residue at position 1 (M1) is an N-acetylmethionine. Topologically, residues 1 to 291 (MEGPGLGSQC…RLWRWLHKCE (291 aa)) are cytoplasmic. 7 ANK repeats span residues 43 to 78 (PLIE…VRQP), 81 to 110 (ENVS…VIDQ), 115 to 144 (LNST…DPTL), 148 to 177 (EGFS…SVNM), 181 to 211 (NGQT…SLSV), 216 to 245 (HQNT…SLDI), and 249 to 277 (KGET…KMRA). Residues 292–312 (LFLLLILSMITLWAVGYILDF) traverse the membrane as a helical segment. The Lumenal portion of the chain corresponds to 313–320 (NSDSWLLK). The helical transmembrane segment at 321 to 341 (GCLLVALFFLTSLFPRFLVGY) threads the bilayer. The Cytoplasmic segment spans residues 342–347 (KNLVYL). Residues 348–368 (PTVFLLSSIFWIFMTWFILFF) form a helical membrane-spanning segment. Residues 369–371 (PDT) are Lumenal-facing. A helical membrane pass occupies residues 372–392 (AGSPLYFAFIFSIMAFLYFFY). Residues 393-470 (KTWATDPGFT…RCIGFGNHHH (78 aa)) lie on the Cytoplasmic side of the membrane. One can recognise a DHHC domain in the interval 426–476 (TFCTSCLIRKPLRSLHCHVCNSCVARFDQHCFWTGRCIGFGNHHHYIFFLL). The active-site S-palmitoyl cysteine intermediate is the C456. Residues 471–491 (YIFFLLSLSMVCDWIIYGSFV) form a helical membrane-spanning segment. The Lumenal segment spans residues 492-518 (YWSNHCATTFKEDGLWTYLNQIVACSP). Residues 519 to 539 (WVLYIFMLAAFHFSWSTFLLI) traverse the membrane as a helical segment. Residues 540–622 (NQLFQIAFLG…PAKEKVLRSV (83 aa)) are Cytoplasmic-facing.

The protein belongs to the DHHC palmitoyltransferase family. AKR/ZDHHC17 subfamily. Interacts (via ANK repeats) with CLIP3. Interacts (via ANK repeats) with DNAJC5 (via C-terminus). Interacts (via ANK repeats) with HTT. Interacts (via ANK repeats) with MAP6. Interacts (via ANK repeats) with SNAP23. Interacts (via ANK repeats) with SNAP25. May interact (via ANK repeats) with SPRED2. Expressed in most adult tissues, but at low levels in the liver, skin, and lung.

It localises to the golgi apparatus membrane. It is found in the cytoplasmic vesicle membrane. It catalyses the reaction L-cysteinyl-[protein] + hexadecanoyl-CoA = S-hexadecanoyl-L-cysteinyl-[protein] + CoA. Its function is as follows. Palmitoyltransferase that could catalyze the addition of palmitate onto various protein substrates. Palmitoyltransferase for HTT and GAD2. May play a role in Mg(2+) transport. This chain is Palmitoyltransferase ZDHHC13, found in Mus musculus (Mouse).